Consider the following 184-residue polypeptide: Dynactin subunit 6 (184 aa).

The protein belongs to the dynactin subunits 5/6 family. Dynactin subunit 6 subfamily. In terms of assembly, subunit of dynactin, a multiprotein complex part of a tripartite complex with dynein and a adapter, such as BICDL1, BICD2 or HOOK3. The dynactin complex is built around ACTR1A/ACTB filament and consists of an actin-related filament composed of a shoulder domain, a pointed end and a barbed end.

The protein localises to the cytoplasm. It localises to the cytoskeleton. Part of the dynactin complex that activates the molecular motor dynein for ultra-processive transport along microtubules. This Nematostella vectensis (Starlet sea anemone) protein is Dynactin subunit 6 (dctn6).